We begin with the raw amino-acid sequence, 350 residues long: Holliday junction branch migration complex subunit RuvB (350 aa).

The disordered stretch occupies residues 1-22; it reads MDHTASLSPVRPEAQPTDDRER. The interval 1–185 is large ATPase domain (RuvB-L); it reads MDHTASLSPV…FGIVERFEFY (185 aa). ATP-binding positions include Leu24, Arg25, Gly66, Lys69, Thr70, Thr71, 132–134, Arg175, Tyr185, and Arg222; that span reads EDY. Thr70 is a Mg(2+) binding site. Residues 186 to 256 are small ATPAse domain (RuvB-S); sequence TPEELAAIVQ…IVRAGLAHLK (71 aa). Residues 259–350 are head domain (RuvB-H); that stretch reads ELGLELHDIQ…PHSPEQGTLL (92 aa). The DNA site is built by Arg314 and Arg319.

The protein belongs to the RuvB family. In terms of assembly, homohexamer. Forms an RuvA(8)-RuvB(12)-Holliday junction (HJ) complex. HJ DNA is sandwiched between 2 RuvA tetramers; dsDNA enters through RuvA and exits via RuvB. An RuvB hexamer assembles on each DNA strand where it exits the tetramer. Each RuvB hexamer is contacted by two RuvA subunits (via domain III) on 2 adjacent RuvB subunits; this complex drives branch migration. In the full resolvosome a probable DNA-RuvA(4)-RuvB(12)-RuvC(2) complex forms which resolves the HJ.

It localises to the cytoplasm. The catalysed reaction is ATP + H2O = ADP + phosphate + H(+). In terms of biological role, the RuvA-RuvB-RuvC complex processes Holliday junction (HJ) DNA during genetic recombination and DNA repair, while the RuvA-RuvB complex plays an important role in the rescue of blocked DNA replication forks via replication fork reversal (RFR). RuvA specifically binds to HJ cruciform DNA, conferring on it an open structure. The RuvB hexamer acts as an ATP-dependent pump, pulling dsDNA into and through the RuvAB complex. RuvB forms 2 homohexamers on either side of HJ DNA bound by 1 or 2 RuvA tetramers; 4 subunits per hexamer contact DNA at a time. Coordinated motions by a converter formed by DNA-disengaged RuvB subunits stimulates ATP hydrolysis and nucleotide exchange. Immobilization of the converter enables RuvB to convert the ATP-contained energy into a lever motion, pulling 2 nucleotides of DNA out of the RuvA tetramer per ATP hydrolyzed, thus driving DNA branch migration. The RuvB motors rotate together with the DNA substrate, which together with the progressing nucleotide cycle form the mechanistic basis for DNA recombination by continuous HJ branch migration. Branch migration allows RuvC to scan DNA until it finds its consensus sequence, where it cleaves and resolves cruciform DNA. The sequence is that of Holliday junction branch migration complex subunit RuvB from Treponema pallidum (strain Nichols).